The following is a 195-amino-acid chain: UPF0215 protein TSIB_1161 (195 aa).

Belongs to the UPF0215 family.

The polypeptide is UPF0215 protein TSIB_1161 (Thermococcus sibiricus (strain DSM 12597 / MM 739)).